A 107-amino-acid polypeptide reads, in one-letter code: Ig kappa chain V-VI region NQ6-8.3.1 (107 aa).

The tract at residues 1–23 is framework-1; that stretch reads QIVLTQSPAIMSASPGQKVTMTC. A disulfide bridge links Cys-23 with Cys-87. The tract at residues 24 to 33 is complementarity-determining-1; that stretch reads SASSSVSYMH. Residues 34 to 48 form a framework-2 region; that stretch reads WYQQKSGTSPKRWIY. The segment at 49 to 55 is complementarity-determining-2; that stretch reads DTSKLAS. The framework-3 stretch occupies residues 56-87; the sequence is GXPARFSGSGSATSYSLTITSMQAEDAATYYC. The tract at residues 88-96 is complementarity-determining-3; it reads QQWSSNPLT. The tract at residues 97–106 is framework-4; sequence FGAGTKLELK.

In terms of biological role, anti-2-phenyl oxazolone (PHOX) Antibody. This chain is Ig kappa chain V-VI region NQ6-8.3.1, found in Mus musculus (Mouse).